Consider the following 702-residue polypeptide: Antigen peptide transporter 2 (702 aa).

Residues 1 to 6 (MALSYL) are Lumenal-facing. Residues 7–27 (RPWVSLLLADMALLGLLQGSL) form a helical membrane-spanning segment. At 28–56 (GNLLPQGLPGLWIEGTLRLGVLWGLLKVG) the chain is on the cytoplasmic side. Residues 57-77 (ELLGLVGTLLPLLCLATPLFF) traverse the membrane as a helical segment. At 78–98 (SLRALVGGTASTSVVRVASAS) the chain is on the lumenal side. The chain crosses the membrane as a helical span at residues 99 to 119 (WGWLLAGYGAVALSWAVWAVL). Residues 120 to 147 (SPAGVQEKEPGQENRTLMKRLLKLSRPD) are Cytoplasmic-facing. Residues 148-168 (LPFLIAAFFFLVVAVWGETLI) traverse the membrane as a helical segment. Residues 151–434 (LIAAFFFLVV…LVYMYGDMLS (284 aa)) enclose the ABC transmembrane type-1 domain. Residues 169 to 186 (PRYSGRVIDILGGDFDPD) lie on the Lumenal side of the membrane. The helical transmembrane segment at 187–207 (AFASAIFFMCLFSVGSSFSAG) threads the bilayer. Residues 208–265 (CRGGSFLFTMSRINLRIREQLFSSLLRQDLGFFQETKTGELNSRLSSDTSLMSRWLPF) lie on the Cytoplasmic side of the membrane. A helical membrane pass occupies residues 266–286 (NANILLRSLVKVVGLYFFMLQ). The Lumenal segment spans residues 287 to 292 (VSPRLT). The chain crosses the membrane as a helical span at residues 293–313 (FLSLLDLPLTIAAEKVYNPRH). The segment at 300–388 (PLTIAAEKVY…RRVMALGMQV (89 aa)) is part of the peptide-binding site. At 314–373 (QAVLKEIQDAVAKAGQVVREAVGGLQTVRSFGAEEQEVSHYKEALERCRQLWWRRDLEKD) the chain is on the cytoplasmic side. A helical transmembrane segment spans residues 374–394 (VYLVIRRVMALGMQVLILNCG). Residues 395–407 (VQQILAGEVTRGG) lie on the Lumenal side of the membrane. Residues 408-428 (LLSFLLYQEEVGQYVRNLVYM) traverse the membrane as a helical segment. Residues 413–432 (LYQEEVGQYVRNLVYMYGDM) are part of the peptide-binding site. At 429 to 702 (YGDMLSNVGA…AHLVQQRLEA (274 aa)) the chain is on the cytoplasmic side. The ABC transporter domain maps to 467–701 (VEFQDVSFSY…YAHLVQQRLE (235 aa)). Residue 502–509 (GPNGSGKS) participates in ATP binding.

This sequence belongs to the ABC transporter superfamily. ABCB family. MHC peptide exporter (TC 3.A.1.209) subfamily. In terms of assembly, heterodimer of TAP1 and TAP2 (TAP1-TAP2). A component of the peptide loading complex (PLC), interacts via TAPBP with MHCI heterodimer; this interaction mediates peptide-MHCI assembly. It depends on Mg(2+) as a cofactor.

The protein localises to the endoplasmic reticulum membrane. It carries out the reaction a peptide antigen(in) + ATP + H2O = a peptide antigen(out) + ADP + phosphate + H(+). Its function is as follows. ABC transporter associated with antigen processing. In complex with TAP1 mediates unidirectional translocation of peptide antigens from cytosol to endoplasmic reticulum (ER) for loading onto MHC class I (MHCI) molecules. Uses the chemical energy of ATP to export peptides against the concentration gradient. During the transport cycle alternates between 'inward-facing' state with peptide binding site facing the cytosol to 'outward-facing' state with peptide binding site facing the ER lumen. Peptide antigen binding to ATP-loaded TAP1-TAP2 induces a switch to hydrolysis-competent 'outward-facing' conformation ready for peptide loading onto nascent MHCI molecules. Subsequently ATP hydrolysis resets the transporter to the 'inward facing' state for a new cycle. As a component of the peptide loading complex (PLC), acts as a molecular scaffold essential for peptide-MHCI assembly and antigen presentation. This is Antigen peptide transporter 2 (Tap2) from Mus musculus (Mouse).